Reading from the N-terminus, the 168-residue chain is 3-isopropylmalate dehydratase small subunit (168 aa).

This sequence belongs to the LeuD family. LeuD type 2 subfamily. Heterodimer of LeuC and LeuD.

It carries out the reaction (2R,3S)-3-isopropylmalate = (2S)-2-isopropylmalate. It participates in amino-acid biosynthesis; L-leucine biosynthesis; L-leucine from 3-methyl-2-oxobutanoate: step 2/4. In terms of biological role, catalyzes the isomerization between 2-isopropylmalate and 3-isopropylmalate, via the formation of 2-isopropylmaleate. This is 3-isopropylmalate dehydratase small subunit from Thermodesulfovibrio yellowstonii (strain ATCC 51303 / DSM 11347 / YP87).